The chain runs to 804 residues: SH3-containing GRB2-like protein 3-interacting protein 1 (804 aa).

Disordered regions lie at residues 1-90 (MMEG…EESH), 124-181 (LSPS…GPPL), and 199-254 (IWGS…QSAT). Basic and acidic residues predominate over residues 16 to 34 (RKKEKDTDSTGSPDRDGIK). S54, S80, S81, S83, S125, S127, S132, and S145 each carry phosphoserine. Phosphothreonine is present on residues T156 and T158. Residue S212 is modified to Phosphoserine. The segment covering 221–236 (TGTPPPLPPKNVPATP) has biased composition (pro residues). Phosphothreonine is present on residues T223 and T235. Phosphoserine is present on residues S241, S263, S276, S292, and S295. Positions 289–309 (VHFSDTSPEHVTPELTPREKV) are enriched in basic and acidic residues. A disordered region spans residues 289–500 (VHFSDTSPEH…LSAATTPTVE (212 aa)). A phosphothreonine mark is found at T300 and T304. A compositionally biased stretch (pro residues) spans 322–346 (SPAPGPLGPPGPTGPPGPPGPPRNV). A Phosphoserine modification is found at S348. Residues 354 to 369 (EVQKKVAEQTFIKDDY) are compositionally biased toward basic and acidic residues. S375 bears the Phosphoserine mark. Position 386 is a phosphothreonine (T386). Low complexity predominate over residues 413-432 (TSGASSPARPATPLLPCSST). A compositionally biased stretch (pro residues) spans 433–451 (TPPPPPPRPPSRPKLPPGK). Low complexity-rich tracts occupy residues 458-468 (SRPFSPPIHSS) and 475-498 (PLAR…TTPT). Phosphoserine is present on S462. The 269-residue stretch at 535-803 (TLPVAAAFTE…RFAAGKYLAD (269 aa)) folds into the MHD domain. Interaction with DPF motifs-containing proteins regions lie at residues 537-543 (PVAAAFT), 569-571 (SFP), 643-646 (TYYN), and 789-794 (SLIKKR). Positions 625-804 (MPNLMTHLKK…FAAGKYLADN (180 aa)) are necessary and sufficient to mediate interaction with CANX.

As to quaternary structure, interacts with proteins essential or regulating the formation of functional clathrin-coated pits. Interacts with CANX. Interacts with AP2A1. Interacts with EPS15. Interacts with SH3GL3. Interacts with AMPH. Interacts with ITSN1 (via SH3 domains). Interacts with and REPS1.

It is found in the membrane. The protein localises to the clathrin-coated pit. Its function is as follows. May function in clathrin-mediated endocytosis. Has both a membrane binding/tubulating activity and the ability to recruit proteins essential to the formation of functional clathrin-coated pits. Has a preference for membranes enriched in phosphatidylserine and phosphoinositides and is required for the endocytosis of the transferrin receptor. May also bind tubulin. May play a role in the regulation of energy homeostasis. In Pongo abelii (Sumatran orangutan), this protein is SH3-containing GRB2-like protein 3-interacting protein 1 (SGIP1).